A 177-amino-acid polypeptide reads, in one-letter code: Inner membrane-spanning protein YciB (177 aa).

The next 5 membrane-spanning stretches (helical) occupy residues 22–42 (IFIA…LYWI), 50–70 (INLF…IFHN), 76–96 (WKIT…QFFM), 121–141 (FFWA…ALCL), and 151–171 (VFGL…YINF).

It belongs to the YciB family.

Its subcellular location is the cell inner membrane. Its function is as follows. Plays a role in cell envelope biogenesis, maintenance of cell envelope integrity and membrane homeostasis. This Buchnera aphidicola subsp. Schizaphis graminum (strain Sg) protein is Inner membrane-spanning protein YciB.